Here is a 30-residue protein sequence, read N- to C-terminus: Propionyl-CoA carboxylase alpha chain (30 aa).

In terms of domain architecture, Biotin carboxylation spans 1 to 30 (PKIRKVLVANRGEIAIRVMRTXKELGIATV).

As to quaternary structure, dodecamer composed of six biotin-containing alpha subunits and six beta subunits. Mg(2+) is required as a cofactor. Mn(2+) serves as cofactor. The cofactor is biotin.

The catalysed reaction is propanoyl-CoA + hydrogencarbonate + ATP = (S)-methylmalonyl-CoA + ADP + phosphate + H(+). Its pathway is metabolic intermediate metabolism; propanoyl-CoA degradation; succinyl-CoA from propanoyl-CoA: step 1/3. Functionally, this is one of the 2 subunits of the biotin-dependent propionyl-CoA carboxylase (PCC), the enzyme catalyzing the carboxylation of propionyl-CoA/propanoyl-CoA to D-methylmalonyl-CoA/(S)-methylmalonyl-CoA. Within the holoenzyme, the alpha subunit catalyzes the ATP-dependent carboxylation of the biotin carried by the biotin carboxyl carrier (BCC) domain, while the beta subunit then transfers the carboxyl group from carboxylated biotin to propionyl-CoA. Propionyl-CoA carboxylase also carboxylates acetyl-CoA, butyryl-CoA and succinyl-CoA. In Myxococcus xanthus, this protein is Propionyl-CoA carboxylase alpha chain.